Reading from the N-terminus, the 417-residue chain is UDP-N-acetylglucosamine 1-carboxyvinyltransferase (417 aa).

22 to 23 (KN) is a binding site for phosphoenolpyruvate. Arg92 lines the UDP-N-acetyl-alpha-D-glucosamine pocket. Cys116 functions as the Proton donor in the catalytic mechanism. Cys116 carries the post-translational modification 2-(S-cysteinyl)pyruvic acid O-phosphothioketal. UDP-N-acetyl-alpha-D-glucosamine is bound by residues Asp304 and Ile326.

It belongs to the EPSP synthase family. MurA subfamily.

It localises to the cytoplasm. It catalyses the reaction phosphoenolpyruvate + UDP-N-acetyl-alpha-D-glucosamine = UDP-N-acetyl-3-O-(1-carboxyvinyl)-alpha-D-glucosamine + phosphate. It participates in cell wall biogenesis; peptidoglycan biosynthesis. Cell wall formation. Adds enolpyruvyl to UDP-N-acetylglucosamine. The protein is UDP-N-acetylglucosamine 1-carboxyvinyltransferase of Desulforapulum autotrophicum (strain ATCC 43914 / DSM 3382 / VKM B-1955 / HRM2) (Desulfobacterium autotrophicum).